The primary structure comprises 561 residues: Arginine--tRNA ligase (561 aa).

Residues 136–146 (ANPTGLLHMGN) carry the 'HIGH' region motif.

It belongs to the class-I aminoacyl-tRNA synthetase family. As to quaternary structure, monomer.

The protein resides in the cytoplasm. It catalyses the reaction tRNA(Arg) + L-arginine + ATP = L-arginyl-tRNA(Arg) + AMP + diphosphate. In Desulforamulus reducens (strain ATCC BAA-1160 / DSM 100696 / MI-1) (Desulfotomaculum reducens), this protein is Arginine--tRNA ligase.